We begin with the raw amino-acid sequence, 400 residues long: NADH dehydrogenase-like protein Rv1812c (400 aa).

The protein belongs to the NADH dehydrogenase family. FAD is required as a cofactor.

The chain is NADH dehydrogenase-like protein Rv1812c from Mycobacterium tuberculosis (strain ATCC 25618 / H37Rv).